Reading from the N-terminus, the 207-residue chain is Putative 3-methyladenine DNA glycosylase (207 aa).

The protein belongs to the DNA glycosylase MPG family.

This chain is Putative 3-methyladenine DNA glycosylase, found in Burkholderia cenocepacia (strain HI2424).